The primary structure comprises 135 residues: MIMSRSAIIEKLQNEQMKKDITPFRIGDTVRVHIRIIEGDKERTQVFAGTVIARKGQGLSETFSVHRVAYGEGMERVFMLHSPRIAKIEVIKEGDVRRSKLYYLRGTSGKASKVKARLGARRSSNAVTKQIVSAE.

It belongs to the bacterial ribosomal protein bL19 family.

In terms of biological role, this protein is located at the 30S-50S ribosomal subunit interface and may play a role in the structure and function of the aminoacyl-tRNA binding site. The polypeptide is Large ribosomal subunit protein bL19 (Protochlamydia amoebophila (strain UWE25)).